Consider the following 357-residue polypeptide: Phenylalanine--tRNA ligase alpha subunit (357 aa).

Residue E257 coordinates Mg(2+).

The protein belongs to the class-II aminoacyl-tRNA synthetase family. Phe-tRNA synthetase alpha subunit type 1 subfamily. In terms of assembly, tetramer of two alpha and two beta subunits. Requires Mg(2+) as cofactor.

It is found in the cytoplasm. It carries out the reaction tRNA(Phe) + L-phenylalanine + ATP = L-phenylalanyl-tRNA(Phe) + AMP + diphosphate + H(+). In Roseobacter denitrificans (strain ATCC 33942 / OCh 114) (Erythrobacter sp. (strain OCh 114)), this protein is Phenylalanine--tRNA ligase alpha subunit.